The primary structure comprises 129 residues: MMLDTLANALSTIMNNEVRGKKQCVIYPSSKLIVAVLDTLKRSGYIGDFELIDDGRGGKIVVNLLGRINKIGVIKPRYPVKKNEFEAWEREYLPSRDVGLLIVSTPKGVMTHREAKEKGLGGVLLAYVY.

It belongs to the universal ribosomal protein uS8 family. Part of the 30S ribosomal subunit.

In terms of biological role, one of the primary rRNA binding proteins, it binds directly to 16S rRNA central domain where it helps coordinate assembly of the platform of the 30S subunit. This chain is Small ribosomal subunit protein uS8, found in Thermofilum pendens (strain DSM 2475 / Hrk 5).